Consider the following 353-residue polypeptide: H(2)-forming methylenetetrahydromethanopterin dehydrogenase-related protein MJ1338 (353 aa).

Belongs to the HMD family.

The polypeptide is H(2)-forming methylenetetrahydromethanopterin dehydrogenase-related protein MJ1338 (Methanocaldococcus jannaschii (strain ATCC 43067 / DSM 2661 / JAL-1 / JCM 10045 / NBRC 100440) (Methanococcus jannaschii)).